Consider the following 1162-residue polypeptide: DNA-directed RNA polymerase subunit beta (1162 aa).

This sequence belongs to the RNA polymerase beta chain family. In terms of assembly, the RNAP catalytic core consists of 2 alpha, 1 beta, 1 beta' and 1 omega subunit. When a sigma factor is associated with the core the holoenzyme is formed, which can initiate transcription.

It carries out the reaction RNA(n) + a ribonucleoside 5'-triphosphate = RNA(n+1) + diphosphate. Its function is as follows. DNA-dependent RNA polymerase catalyzes the transcription of DNA into RNA using the four ribonucleoside triphosphates as substrates. This is DNA-directed RNA polymerase subunit beta from Clavibacter sepedonicus (Clavibacter michiganensis subsp. sepedonicus).